The sequence spans 263 residues: Acetylglutamate kinase (263 aa).

Substrate-binding positions include 49–50 (GG), Arg-71, and Asn-163.

The protein belongs to the acetylglutamate kinase family. ArgB subfamily.

The protein resides in the cytoplasm. The enzyme catalyses N-acetyl-L-glutamate + ATP = N-acetyl-L-glutamyl 5-phosphate + ADP. It participates in amino-acid biosynthesis; L-arginine biosynthesis; N(2)-acetyl-L-ornithine from L-glutamate: step 2/4. Catalyzes the ATP-dependent phosphorylation of N-acetyl-L-glutamate. The polypeptide is Acetylglutamate kinase (Moritella abyssi).